The sequence spans 214 residues: Fruiting body protein SC14 (214 aa).

The first 18 residues, 1–18 (MKLNIAILLAALAATASA), serve as a signal peptide directing secretion. N-linked (GlcNAc...) asparagine glycosylation is found at asparagine 61 and asparagine 144. The SCP domain maps to 72-195 (LTAHNDERAQ…KSLWYYVCNY (124 aa)).

Belongs to the CRISP family.

The protein localises to the secreted. This Schizophyllum commune (Split gill fungus) protein is Fruiting body protein SC14 (SC14).